The sequence spans 155 residues: uncharacterized protein (155 aa).

Residues 5–25 (GIIICVGIAFLIFIFLWAYFK) form a helical membrane-spanning segment.

The protein localises to the membrane. This is an uncharacterized protein from Acheta domesticus (House cricket).